We begin with the raw amino-acid sequence, 303 residues long: ASC1-like protein (303 aa).

6 consecutive transmembrane segments (helical) span residues 19–39 (YEDF…RFLL), 81–101 (CIYF…EPWF), 127–147 (ALYM…IFWE), 153–173 (FGVS…SYNI), 212–232 (YLCL…VLWS), and 255–275 (YIFN…WVLI). Positions 72-284 (RKFKESAWKC…IYRMLVKQIQ (213 aa)) constitute a TLC domain.

It is found in the endoplasmic reticulum membrane. Functionally, mediates resistance to sphinganine-analog mycotoxins (SAMs) by restoring the sphingolipid biosynthesis. Could salvage the transport of GPI-anchored proteins from the endoplasmic reticulum to the Golgi apparatus in ceramides-depleted cells after SAM exposure. The protein is ASC1-like protein of Solanum lycopersicum (Tomato).